A 547-amino-acid chain; its full sequence is Type I inositol polyphosphate 5-phosphatase 4 (547 aa).

The segment covering 56-67 (CSVRKSKTETRS) has biased composition (basic and acidic residues). Residues 56-80 (CSVRKSKTETRSKRNSGRARRNKLD) form a disordered region. 2 catalytic regions span residues 387-402 (DRVI…IALS) and 467-482 (KRRT…WHGS).

Belongs to the inositol polyphosphate 5-phosphatase family.

The sequence is that of Type I inositol polyphosphate 5-phosphatase 4 from Arabidopsis thaliana (Mouse-ear cress).